Consider the following 379-residue polypeptide: UDP-N-acetylglucosamine--N-acetylmuramyl-(pentapeptide) pyrophosphoryl-undecaprenol N-acetylglucosamine transferase (379 aa).

UDP-N-acetyl-alpha-D-glucosamine is bound by residues Thr-17–Gly-19, Asn-128, Arg-169, Ser-197, and Gln-298.

It belongs to the glycosyltransferase 28 family. MurG subfamily.

The protein localises to the cell inner membrane. It catalyses the reaction di-trans,octa-cis-undecaprenyl diphospho-N-acetyl-alpha-D-muramoyl-L-alanyl-D-glutamyl-meso-2,6-diaminopimeloyl-D-alanyl-D-alanine + UDP-N-acetyl-alpha-D-glucosamine = di-trans,octa-cis-undecaprenyl diphospho-[N-acetyl-alpha-D-glucosaminyl-(1-&gt;4)]-N-acetyl-alpha-D-muramoyl-L-alanyl-D-glutamyl-meso-2,6-diaminopimeloyl-D-alanyl-D-alanine + UDP + H(+). It participates in cell wall biogenesis; peptidoglycan biosynthesis. Its function is as follows. Cell wall formation. Catalyzes the transfer of a GlcNAc subunit on undecaprenyl-pyrophosphoryl-MurNAc-pentapeptide (lipid intermediate I) to form undecaprenyl-pyrophosphoryl-MurNAc-(pentapeptide)GlcNAc (lipid intermediate II). In Brucella suis (strain ATCC 23445 / NCTC 10510), this protein is UDP-N-acetylglucosamine--N-acetylmuramyl-(pentapeptide) pyrophosphoryl-undecaprenol N-acetylglucosamine transferase.